The primary structure comprises 214 residues: Adenylate kinase (214 aa).

ATP is bound at residue 10-15 (GAGKGT). The interval 30–59 (STGDMLRAAVKAGTPLGLEAKKVMDAGQLV) is NMP. AMP contacts are provided by residues Thr31, Arg36, 57 to 59 (QLV), 85 to 88 (GFPR), and Gln92. The tract at residues 122-159 (GRRVHSGSGRVYHVVFNPPKVEGKDDVTGEDLSIRPDD) is LID. Residues Arg123 and 132–133 (VY) contribute to the ATP site. AMP-binding residues include Arg156 and Arg167. Gln200 contacts ATP.

This sequence belongs to the adenylate kinase family. In terms of assembly, monomer.

The protein resides in the cytoplasm. It catalyses the reaction AMP + ATP = 2 ADP. The protein operates within purine metabolism; AMP biosynthesis via salvage pathway; AMP from ADP: step 1/1. Catalyzes the reversible transfer of the terminal phosphate group between ATP and AMP. Plays an important role in cellular energy homeostasis and in adenine nucleotide metabolism. This chain is Adenylate kinase, found in Shewanella denitrificans (strain OS217 / ATCC BAA-1090 / DSM 15013).